Reading from the N-terminus, the 203-residue chain is ATP-dependent Clp protease proteolytic subunit 1 (203 aa).

The Nucleophile role is filled by Ser-102. The active site involves His-127.

Belongs to the peptidase S14 family. As to quaternary structure, fourteen ClpP subunits assemble into 2 heptameric rings which stack back to back to give a disk-like structure with a central cavity, resembling the structure of eukaryotic proteasomes.

Its subcellular location is the cytoplasm. The enzyme catalyses Hydrolysis of proteins to small peptides in the presence of ATP and magnesium. alpha-casein is the usual test substrate. In the absence of ATP, only oligopeptides shorter than five residues are hydrolyzed (such as succinyl-Leu-Tyr-|-NHMec, and Leu-Tyr-Leu-|-Tyr-Trp, in which cleavage of the -Tyr-|-Leu- and -Tyr-|-Trp bonds also occurs).. Functionally, cleaves peptides in various proteins in a process that requires ATP hydrolysis. Has a chymotrypsin-like activity. Plays a major role in the degradation of misfolded proteins. The sequence is that of ATP-dependent Clp protease proteolytic subunit 1 from Rhizobium johnstonii (strain DSM 114642 / LMG 32736 / 3841) (Rhizobium leguminosarum bv. viciae).